The sequence spans 108 residues: MEVRTFAFLQIVVFVALGIQLFAAVTDAADADDEFFTVDYCGMNCTLQQDGSWTPCTQKNAECKCYHESGSSVGLCLSTAYTDFNQFGDPNNSDLDAATPRHPDASSR.

Positions 1-31 are cleaved as a signal peptide; that stretch reads MEVRTFAFLQIVVFVALGIQLFAAVTDAADA. Cystine bridges form between Cys41–Cys63, Cys45–Cys65, and Cys56–Cys76. Asn44 carries an N-linked (GlcNAc...) asparagine glycan. Residues 88–108 are disordered; the sequence is GDPNNSDLDAATPRHPDASSR. An N-linked (GlcNAc...) asparagine glycan is attached at Asn91. Over residues 99-108 the composition is skewed to basic and acidic residues; that stretch reads TPRHPDASSR.

The protein localises to the secreted. In terms of biological role, salivary chemokine-binding protein which binds to host chemokines CXCL1 and CXCL8. The sequence is that of Evasin P1229 from Ixodes ricinus (Common tick).